We begin with the raw amino-acid sequence, 138 residues long: UPF0201 protein TK1335 (138 aa).

Belongs to the UPF0201 family.

This is UPF0201 protein TK1335 from Thermococcus kodakarensis (strain ATCC BAA-918 / JCM 12380 / KOD1) (Pyrococcus kodakaraensis (strain KOD1)).